The chain runs to 259 residues: Global transcriptional regulator CodY (259 aa).

The interval 1-155 (MDLLSKTRRI…GATVVGMEIL (155 aa)) is GAF domain. Residues 203 to 222 (ASKIADRVGITRSVIVNALR) constitute a DNA-binding region (H-T-H motif).

The protein belongs to the CodY family.

It localises to the cytoplasm. Functionally, DNA-binding global transcriptional regulator which is involved in the adaptive response to starvation and acts by directly or indirectly controlling the expression of numerous genes in response to nutrient availability. During rapid exponential growth, CodY is highly active and represses genes whose products allow adaptation to nutrient depletion. This Brevibacillus brevis (strain 47 / JCM 6285 / NBRC 100599) protein is Global transcriptional regulator CodY.